The chain runs to 511 residues: Cytochrome P450 76C4 (511 aa).

A helical membrane pass occupies residues 3–23 (IISGQALFLLFCFISSCFLIS). Cys-450 contacts heme.

Belongs to the cytochrome P450 family. Requires heme as cofactor.

It is found in the membrane. This Arabidopsis thaliana (Mouse-ear cress) protein is Cytochrome P450 76C4 (CYP76C4).